Consider the following 433-residue polypeptide: Glutamate-1-semialdehyde 2,1-aminomutase (433 aa).

Residue Lys269 is modified to N6-(pyridoxal phosphate)lysine.

This sequence belongs to the class-III pyridoxal-phosphate-dependent aminotransferase family. HemL subfamily. In terms of assembly, homodimer. Requires pyridoxal 5'-phosphate as cofactor.

It is found in the cytoplasm. The catalysed reaction is (S)-4-amino-5-oxopentanoate = 5-aminolevulinate. It functions in the pathway porphyrin-containing compound metabolism; protoporphyrin-IX biosynthesis; 5-aminolevulinate from L-glutamyl-tRNA(Glu): step 2/2. This Renibacterium salmoninarum (strain ATCC 33209 / DSM 20767 / JCM 11484 / NBRC 15589 / NCIMB 2235) protein is Glutamate-1-semialdehyde 2,1-aminomutase.